A 382-amino-acid chain; its full sequence is Gap junction alpha-1 protein (382 aa).

Over 2–23 (GDWSALGKLLDKVQAYSTAGGK) the chain is Cytoplasmic. Position 5 is a phosphoserine (Ser-5). Residues 24–44 (VWLSVLFIFRILLLGTAVESA) form a helical membrane-spanning segment. At 45-76 (WGDEQSAFRCNTQQPGCENVCYDKSFPISHVR) the chain is on the extracellular side. 2 cysteine pairs are disulfide-bonded: Cys-54–Cys-192 and Cys-187–Cys-198. A helical membrane pass occupies residues 77–97 (FWVLQIIFVSVPTLLYLAHVF). Residues 98-155 (YVMRKEEKLNKKEEELKVAQTDGVNVEMHLKQIEIKKFKYGIEEHGKVKMRGGLLRTY) are Cytoplasmic-facing. Lys-144 is covalently cross-linked (Glycyl lysine isopeptide (Lys-Gly) (interchain with G-Cter in SUMO)). Residues 156–176 (IISILFKSVFEVAFLLIQWYI) form a helical membrane-spanning segment. Residues 177–207 (YGFSLSAVYTCKRDPCPHQVDCFLSRPTEKT) lie on the Extracellular side of the membrane. Residues 208-228 (IFIIFMLVVSLVSLALNIIEL) traverse the membrane as a helical segment. Topologically, residues 229–382 (FYVFFKGVKD…SRPRPDDLEI (154 aa)) are cytoplasmic. A Glycyl lysine isopeptide (Lys-Gly) (interchain with G-Cter in SUMO) cross-link involves residue Lys-237. The interval 244–382 (SDPYHATTGP…SRPRPDDLEI (139 aa)) is interaction with NOV. Phosphotyrosine is present on Tyr-247. Ser-255, Ser-257, and Ser-262 each carry phosphoserine. Positions 264–382 (KYAYFNGCSS…SRPRPDDLEI (119 aa)) are interaction with UBQLN4. Position 271 is an S-nitrosocysteine (Cys-271). Residue Thr-275 is modified to Phosphothreonine. A phosphoserine mark is found at Ser-306 and Ser-314. The segment covering 317–332 (QNRMGQAGSTISNSHA) has biased composition (polar residues). Residues 317-382 (QNRMGQAGST…SRPRPDDLEI (66 aa)) are disordered. The residue at position 325 (Ser-325) is a Phosphoserine; by CK1. Phosphothreonine is present on Thr-326. Ser-328 and Ser-330 each carry phosphoserine; by CK1. A phosphoserine mark is found at Ser-344 and Ser-365. Residues 362-374 (RPSSRASSRASSR) are compositionally biased toward low complexity. Ser-368 is subject to Phosphoserine; by PKC/PRKCG and PKC/PRKCD. Residues Ser-369 and Ser-373 each carry the phosphoserine modification.

It belongs to the connexin family. Alpha-type (group II) subfamily. As to quaternary structure, a connexon is composed of a hexamer of connexins. Interacts with SGSM3. Interacts with RIC1/CIP150. Interacts with CNST and CSNK1D. Interacts (via C-terminus) with TJP1. Interacts (via C-terminus) with SRC (via SH3 domain). Interacts (not ubiquitinated) with UBQLN4 (via UBA domain). Interacts with NOV. Interacts with TMEM65. Interacts with ANK3/ANKG and PKP2. Phosphorylation at Ser-325, Ser-328 and Ser-330 by CK1 modulates gap junction assembly. Phosphorylated at Ser-368 by PRKCG; phosphorylation induces disassembly of gap junction plaques and inhibition of gap junction activity. Phosphorylation at Ser-368 by PRKCD triggers its internalization into small vesicles leading to proteasome-mediated degradation. Post-translationally, sumoylated with SUMO1, SUMO2 and SUMO3, which may regulate the level of functional Cx43 gap junctions at the plasma membrane. May be desumoylated by SENP1 or SENP2. In terms of processing, S-nitrosylation at Cys-271 is enriched at the muscle endothelial gap junction in arteries, it augments channel permeability and may regulate of smooth muscle cell to endothelial cell communication. Acetylated in the developing cortex; leading to delocalization from the cell membrane.

It is found in the cell membrane. The protein localises to the cell junction. Its subcellular location is the gap junction. The protein resides in the endoplasmic reticulum. Gap junction protein that acts as a regulator of bladder capacity. A gap junction consists of a cluster of closely packed pairs of transmembrane channels, the connexons, through which materials of low MW diffuse from one cell to a neighboring cell. May play a critical role in the physiology of hearing by participating in the recycling of potassium to the cochlear endolymph. Negative regulator of bladder functional capacity: acts by enhancing intercellular electrical and chemical transmission, thus sensitizing bladder muscles to cholinergic neural stimuli and causing them to contract. May play a role in cell growth inhibition through the regulation of NOV expression and localization. Plays an essential role in gap junction communication in the ventricles. The protein is Gap junction alpha-1 protein (GJA1) of Oryctolagus cuniculus (Rabbit).